A 642-amino-acid chain; its full sequence is Threonine--tRNA ligase (642 aa).

The TGS domain maps to 1-61; the sequence is MPVITLPDGS…ETDVDLAIIT (61 aa). The segment at 243–534 is catalytic; it reads DHRKIGKQLD…LIEEYAGKFP (292 aa). C334, H385, and H511 together coordinate Zn(2+).

This sequence belongs to the class-II aminoacyl-tRNA synthetase family. Homodimer. Zn(2+) serves as cofactor.

The protein localises to the cytoplasm. It carries out the reaction tRNA(Thr) + L-threonine + ATP = L-threonyl-tRNA(Thr) + AMP + diphosphate + H(+). Functionally, catalyzes the attachment of threonine to tRNA(Thr) in a two-step reaction: L-threonine is first activated by ATP to form Thr-AMP and then transferred to the acceptor end of tRNA(Thr). Also edits incorrectly charged L-seryl-tRNA(Thr). The protein is Threonine--tRNA ligase of Shewanella loihica (strain ATCC BAA-1088 / PV-4).